The sequence spans 668 residues: DNA ligase (668 aa).

Residues 34–38 (DTEYD), 83–84 (SL), and Glu-114 contribute to the NAD(+) site. Catalysis depends on Lys-116, which acts as the N6-AMP-lysine intermediate. The NAD(+) site is built by Arg-137, Glu-171, Lys-286, and Lys-310. 4 residues coordinate Zn(2+): Cys-404, Cys-407, Cys-422, and Cys-427. The BRCT domain maps to 588-668 (NSDSIIANKS…FFDLLKSEKG (81 aa)).

Belongs to the NAD-dependent DNA ligase family. LigA subfamily. Mg(2+) serves as cofactor. Mn(2+) is required as a cofactor.

The catalysed reaction is NAD(+) + (deoxyribonucleotide)n-3'-hydroxyl + 5'-phospho-(deoxyribonucleotide)m = (deoxyribonucleotide)n+m + AMP + beta-nicotinamide D-nucleotide.. DNA ligase that catalyzes the formation of phosphodiester linkages between 5'-phosphoryl and 3'-hydroxyl groups in double-stranded DNA using NAD as a coenzyme and as the energy source for the reaction. It is essential for DNA replication and repair of damaged DNA. This chain is DNA ligase, found in Mycoplasma mycoides subsp. mycoides SC (strain CCUG 32753 / NCTC 10114 / PG1).